Here is a 107-residue protein sequence, read N- to C-terminus: U1-lycotoxin-Ls1b (107 aa).

The signal sequence occupies residues 1-20 (MMKVLVVVALLVTLISYSSG). Residues 21-41 (EGIDDLEADELLSLMANEQTR) constitute a propeptide that is removed on maturation. 4 disulfides stabilise this stretch: Cys-44/Cys-59, Cys-51/Cys-68, Cys-58/Cys-86, and Cys-70/Cys-84.

The protein belongs to the neurotoxin 19 (CSTX) family. 04 (U1-Lctx) subfamily. In terms of tissue distribution, expressed by the venom gland.

It is found in the secreted. This chain is U1-lycotoxin-Ls1b, found in Lycosa singoriensis (Wolf spider).